The primary structure comprises 240 residues: Ribosomal RNA small subunit methyltransferase G (240 aa).

Residues G80, F85, 103-105, 131-132, and R150 contribute to the S-adenosyl-L-methionine site; these read DSS and AE.

Belongs to the methyltransferase superfamily. RNA methyltransferase RsmG family.

Its subcellular location is the cytoplasm. In terms of biological role, specifically methylates the N7 position of a guanine in 16S rRNA. This is Ribosomal RNA small subunit methyltransferase G from Thermoanaerobacter pseudethanolicus (strain ATCC 33223 / 39E) (Clostridium thermohydrosulfuricum).